The following is a 357-amino-acid chain: MKFVDEAEIQVIAGNGGDGCVSFRREKFIPLGGPDGGDGGDGGSVWLVADENLNTLVDFRHERIFKAQRGVNGMGQQMYGKAGQDKIISVPIGTVVINVQTDEVIGDMVRHGDRLLVAKGGTGGLGNMHFKSSINRAPRQARPGEQGEERTLKLELKLLADIGMLGFPNVGKSTFIRAVSAATPKVADYPFTTLYPNLGVVKIEAYSSFVIADVPGLIEGAADGVGLGMQFLRHLQRTKLLLHMVDISATADAYGNEKVGVGLLPIEQVRKLEIELERHDPALLDKPRWLVLNKADLMPQEEAQALAEALIAELRWTAPWYLVSAVSREGTWPIMKSAMTLFEHQREVAAEQRVSSR.

Positions 1–159 (MKFVDEAEIQ…RTLKLELKLL (159 aa)) constitute an Obg domain. The OBG-type G domain maps to 160–343 (ADIGMLGFPN…IMKSAMTLFE (184 aa)). GTP contacts are provided by residues 166–173 (GFPNVGKS), 191–195 (FTTLY), 213–216 (DVPG), 293–296 (NKAD), and 324–326 (SAV). Residues Ser-173 and Thr-193 each contribute to the Mg(2+) site.

The protein belongs to the TRAFAC class OBG-HflX-like GTPase superfamily. OBG GTPase family. Monomer. Mg(2+) is required as a cofactor.

The protein localises to the cytoplasm. An essential GTPase which binds GTP, GDP and possibly (p)ppGpp with moderate affinity, with high nucleotide exchange rates and a fairly low GTP hydrolysis rate. Plays a role in control of the cell cycle, stress response, ribosome biogenesis and in those bacteria that undergo differentiation, in morphogenesis control. This Xylella fastidiosa (strain M23) protein is GTPase Obg.